Consider the following 97-residue polypeptide: Putative membrane protein insertion efficiency factor (97 aa).

The disordered stretch occupies residues 68 to 97; that stretch reads VPGTELNTAPRSGQACNPTESTHSTTQTRH. The span at 72 to 97 shows a compositional bias: polar residues; the sequence is ELNTAPRSGQACNPTESTHSTTQTRH.

This sequence belongs to the UPF0161 family.

The protein localises to the cell inner membrane. Functionally, could be involved in insertion of integral membrane proteins into the membrane. This is Putative membrane protein insertion efficiency factor from Marinobacter nauticus (strain ATCC 700491 / DSM 11845 / VT8) (Marinobacter aquaeolei).